Here is a 156-residue protein sequence, read N- to C-terminus: Snaclec A4 (156 aa).

The signal sequence occupies residues 1–23 (MGRSISVSFGLLVVFLSLSGTGA). An intrachain disulfide couples C27 to C38. A C-type lectin domain is found at 34-155 (HEGHCYKVFN…CGQPYRFTCE (122 aa)). The N-linked (GlcNAc...) asparagine glycan is linked to N45. 2 cysteine pairs are disulfide-bonded: C55–C154 and C129–C146.

It belongs to the snaclec family. As to quaternary structure, heterodimer; disulfide-linked. In terms of tissue distribution, expressed by the venom gland.

It is found in the secreted. In terms of biological role, interferes with one step of hemostasis (modulation of platelet aggregation, or coagulation cascade, for example). The protein is Snaclec A4 of Macrovipera lebetinus (Levantine viper).